The primary structure comprises 611 residues: Dihydroxy-acid dehydratase (611 aa).

A Mg(2+)-binding site is contributed by aspartate 81. Cysteine 122 contributes to the [2Fe-2S] cluster binding site. Residues aspartate 123 and lysine 124 each contribute to the Mg(2+) site. N6-carboxylysine is present on lysine 124. Cysteine 195 provides a ligand contact to [2Fe-2S] cluster. Glutamate 491 is a Mg(2+) binding site. Serine 517 serves as the catalytic Proton acceptor.

This sequence belongs to the IlvD/Edd family. Homodimer. [2Fe-2S] cluster serves as cofactor. The cofactor is Mg(2+).

It carries out the reaction (2R)-2,3-dihydroxy-3-methylbutanoate = 3-methyl-2-oxobutanoate + H2O. The catalysed reaction is (2R,3R)-2,3-dihydroxy-3-methylpentanoate = (S)-3-methyl-2-oxopentanoate + H2O. It participates in amino-acid biosynthesis; L-isoleucine biosynthesis; L-isoleucine from 2-oxobutanoate: step 3/4. The protein operates within amino-acid biosynthesis; L-valine biosynthesis; L-valine from pyruvate: step 3/4. Its function is as follows. Functions in the biosynthesis of branched-chain amino acids. Catalyzes the dehydration of (2R,3R)-2,3-dihydroxy-3-methylpentanoate (2,3-dihydroxy-3-methylvalerate) into 2-oxo-3-methylpentanoate (2-oxo-3-methylvalerate) and of (2R)-2,3-dihydroxy-3-methylbutanoate (2,3-dihydroxyisovalerate) into 2-oxo-3-methylbutanoate (2-oxoisovalerate), the penultimate precursor to L-isoleucine and L-valine, respectively. The polypeptide is Dihydroxy-acid dehydratase (Histophilus somni (strain 2336) (Haemophilus somnus)).